A 497-amino-acid chain; its full sequence is Putative aldehyde dehydrogenase AldA (497 aa).

213-219 (GKGSESG) provides a ligand contact to NAD(+). Residues glutamate 257 and cysteine 291 contribute to the active site.

The protein belongs to the aldehyde dehydrogenase family.

The enzyme catalyses an aldehyde + NAD(+) + H2O = a carboxylate + NADH + 2 H(+). The chain is Putative aldehyde dehydrogenase AldA (aldA) from Staphylococcus epidermidis (strain ATCC 35984 / DSM 28319 / BCRC 17069 / CCUG 31568 / BM 3577 / RP62A).